Here is a 339-residue protein sequence, read N- to C-terminus: 4-hydroxythreonine-4-phosphate dehydrogenase (339 aa).

Substrate is bound by residues H141 and T142. A divalent metal cation is bound by residues H171, H215, and H270. Substrate-binding residues include K278, N287, and R296.

Belongs to the PdxA family. As to quaternary structure, homodimer. It depends on Zn(2+) as a cofactor. Mg(2+) serves as cofactor. Requires Co(2+) as cofactor.

It localises to the cytoplasm. It carries out the reaction 4-(phosphooxy)-L-threonine + NAD(+) = 3-amino-2-oxopropyl phosphate + CO2 + NADH. Its pathway is cofactor biosynthesis; pyridoxine 5'-phosphate biosynthesis; pyridoxine 5'-phosphate from D-erythrose 4-phosphate: step 4/5. Functionally, catalyzes the NAD(P)-dependent oxidation of 4-(phosphooxy)-L-threonine (HTP) into 2-amino-3-oxo-4-(phosphooxy)butyric acid which spontaneously decarboxylates to form 3-amino-2-oxopropyl phosphate (AHAP). In Geobacter metallireducens (strain ATCC 53774 / DSM 7210 / GS-15), this protein is 4-hydroxythreonine-4-phosphate dehydrogenase.